Reading from the N-terminus, the 92-residue chain is Phenol 2-monooxygenase, auxiliary component DmpK (92 aa).

As to quaternary structure, homotrimer or homotetramer. Interacts with the phenol hydroxylase components DmpL (P1 component) and DmpN (P3 component).

Its pathway is aromatic compound metabolism; phenol degradation. DmpK is an auxiliary protein associated with the multicomponent phenol hydroxylase DmpLMNOP and it may be involved in the post-translational incorporation of iron into the oxygenase component of the phenol hydroxylase. Required for growth on phenol but not for in vitro phenol hydroxylase activity. The polypeptide is Phenol 2-monooxygenase, auxiliary component DmpK (Pseudomonas sp. (strain CF600)).